The following is a 655-amino-acid chain: p-hydroxybenzoic acid efflux pump subunit AaeB (655 aa).

The Periplasmic portion of the chain corresponds to 1-12 (MGIFSIANQHIR). Residues 13-33 (FAVKLACAIVLALFIGFHFQL) form a helical membrane-spanning segment. The Cytoplasmic portion of the chain corresponds to 34 to 37 (ETPR). A helical membrane pass occupies residues 38-58 (WAVLTAAIVAAGPAFAAGGEP). Residues 59–68 (YSGAIRYRGM) lie on the Periplasmic side of the membrane. Residues 69 to 89 (LRIIGTFIGCIAALIIIISMI) traverse the membrane as a helical segment. The Cytoplasmic segment spans residues 90 to 92 (RAP). Residues 93–113 (LLMILVCCVWAGFCTWISSLV) traverse the membrane as a helical segment. Topologically, residues 114-120 (RIENSYA) are periplasmic. Residues 121–141 (WGLSGYTALIIVITIQTEPLL) form a helical membrane-spanning segment. Residues 142 to 151 (TPQFALERCS) are Cytoplasmic-facing. A helical transmembrane segment spans residues 152-172 (EIVIGIGCAILADLLFSPRSI). Residues 173 to 369 (KQEVDRELDC…RTTLSCILGT (197 aa)) are Periplasmic-facing. The chain crosses the membrane as a helical span at residues 370–390 (LFWLWTGWTSGNGAMVMIAVV). The Cytoplasmic portion of the chain corresponds to 391 to 406 (TSLAMRLPNPRMVCID). Residues 407–427 (FIYGTLAALPLGLLYFLVIIP) form a helical membrane-spanning segment. Residues 428 to 430 (NTQ) are Periplasmic-facing. Residues 431-451 (QSMLLLCLSLAVLGFFIGIEV) form a helical membrane-spanning segment. Over 452–459 (QKRRLGSM) the chain is Cytoplasmic. Residues 460–480 (GALASTINIIVLDNPMTFHFI) traverse the membrane as a helical segment. A topological domain (periplasmic) is located at residue Gln481. Residues 482–502 (FLDSALGQIVGCMLAFIVILL) form a helical membrane-spanning segment. Topologically, residues 503-655 (VRDKSKDRTG…HKYQNALTDS (153 aa)) are cytoplasmic.

This sequence belongs to the aromatic acid exporter ArAE (TC 2.A.85) family.

It localises to the cell inner membrane. Functionally, forms an efflux pump with AaeA. Could function as a metabolic relief valve, allowing to eliminate certain compounds when they accumulate to high levels in the cell. The sequence is that of p-hydroxybenzoic acid efflux pump subunit AaeB from Salmonella typhi.